The following is a 185-amino-acid chain: Elongation factor P (185 aa).

The protein belongs to the elongation factor P family.

It is found in the cytoplasm. The protein operates within protein biosynthesis; polypeptide chain elongation. Functionally, involved in peptide bond synthesis. Stimulates efficient translation and peptide-bond synthesis on native or reconstituted 70S ribosomes in vitro. Probably functions indirectly by altering the affinity of the ribosome for aminoacyl-tRNA, thus increasing their reactivity as acceptors for peptidyl transferase. This Limosilactobacillus reuteri (strain DSM 20016) (Lactobacillus reuteri) protein is Elongation factor P.